A 39-amino-acid polypeptide reads, in one-letter code: Contryphan-Cal1 (39 aa).

The first 20 residues, 1–20 (MTRTAVLLLTLLFLVAMAAS), serve as a signal peptide directing secretion. Cysteines 29 and 35 form a disulfide.

Expressed by the venom duct.

It localises to the secreted. Probable neurotoxin. The protein is Contryphan-Cal1 of Californiconus californicus (California cone).